The sequence spans 842 residues: Squamosa promoter-binding-like protein 9 (842 aa).

The span at 1–18 (MDAPGGGGGGGGGGGGVD) shows a compositional bias: gly residues. 3 disordered regions span residues 1–22 (MDAPGGGGGGGGGGGGVDAGEP), 59–97 (ALLPPAPSPQPAEAEAEAAGPASLPSSMQAEGSKRRVRK), and 140–168 (RKKPKGAGRGSGAAVGGSGGGASRGTPAE). The span at 69–85 (PAEAEAEAAGPASLPSS) shows a compositional bias: low complexity. Residues 146-162 (AGRGSGAAVGGSGGGAS) show a composition bias toward gly residues. The SBP-type; atypical zinc finger occupies 168–245 (EMKCQVPGCE…ERHNKRRRRK (78 aa)). Positions 171, 176, 193, 196, 212, 215, 219, and 231 each coordinate Zn(2+). Positions 228–244 (KRSCRRKLERHNKRRRR) match the Bipartite nuclear localization signal motif. Positions 236-246 (ERHNKRRRRKP) are enriched in basic residues. Residues 236–256 (ERHNKRRRRKPDSKGILEKDI) are disordered.

In terms of tissue distribution, ubiquitous.

The protein resides in the nucleus. In terms of biological role, trans-acting factor that binds specifically to the consensus nucleotide sequence 5'-TNCGTACAA-3'. The chain is Squamosa promoter-binding-like protein 9 (SPL9) from Oryza sativa subsp. japonica (Rice).